We begin with the raw amino-acid sequence, 458 residues long: MISPLSVIILAAGKGTRMQSAKPKVLQTLAGKSLLGHVLDTCHQLTVDDTIIVHGFGGEQVQAHIAEQYAHLPITWVAQTEQLGTGHAVKVTLSDLPKEGQSLILYGDVPLVSCQTLATLQAANIYGVSMLTLTVDNPFGLGRIKRDKAGNIEAIIEQKDASSDEQQIQEINSGIYCVDNALLHKFLPKLSNDNAQQEYYLTDIVKMAVADGITIAAIEPEHTFEIEGVNNRQQLASLERTWQGKLVADLQEAGVQFADPTRVDIRGTLSVGQDVFVDVGVVFEGDCTLGDNVYIEAGCVIKNSQIGNACHIKPYCVIDEATVGAGVDIGPFAHLRPETVLSDNSKVGNFVEIKKSTIGHGSKVNHLSYIGDATVGTGVNVGAGVITCNYDGVNKSQTIIEDHAFIGSNSSLVAPVTIGDTATIAAGSVITKDVDASALAFGRARQTQKDNFQRPTKK.

Residues 1–232 (MISPLSVIIL…TFEIEGVNNR (232 aa)) form a pyrophosphorylase region. Residues 10–13 (LAAG), Lys24, Gln79, 84–85 (GT), 106–108 (YGD), Gly142, Glu157, Asn172, and Asn230 each bind UDP-N-acetyl-alpha-D-glucosamine. Residue Asp108 coordinates Mg(2+). Asn230 lines the Mg(2+) pocket. The tract at residues 233–253 (QQLASLERTWQGKLVADLQEA) is linker. The interval 254–458 (GVQFADPTRV…KDNFQRPTKK (205 aa)) is N-acetyltransferase. UDP-N-acetyl-alpha-D-glucosamine-binding residues include Arg336 and Lys354. His366 acts as the Proton acceptor in catalysis. UDP-N-acetyl-alpha-D-glucosamine is bound by residues Tyr369 and Asn380. Residues Ala383, 389-390 (NY), Ser408, Ala426, and Arg443 each bind acetyl-CoA.

In the N-terminal section; belongs to the N-acetylglucosamine-1-phosphate uridyltransferase family. The protein in the C-terminal section; belongs to the transferase hexapeptide repeat family. As to quaternary structure, homotrimer. Mg(2+) serves as cofactor.

It localises to the cytoplasm. It catalyses the reaction alpha-D-glucosamine 1-phosphate + acetyl-CoA = N-acetyl-alpha-D-glucosamine 1-phosphate + CoA + H(+). The enzyme catalyses N-acetyl-alpha-D-glucosamine 1-phosphate + UTP + H(+) = UDP-N-acetyl-alpha-D-glucosamine + diphosphate. It participates in nucleotide-sugar biosynthesis; UDP-N-acetyl-alpha-D-glucosamine biosynthesis; N-acetyl-alpha-D-glucosamine 1-phosphate from alpha-D-glucosamine 6-phosphate (route II): step 2/2. It functions in the pathway nucleotide-sugar biosynthesis; UDP-N-acetyl-alpha-D-glucosamine biosynthesis; UDP-N-acetyl-alpha-D-glucosamine from N-acetyl-alpha-D-glucosamine 1-phosphate: step 1/1. Its pathway is bacterial outer membrane biogenesis; LPS lipid A biosynthesis. Catalyzes the last two sequential reactions in the de novo biosynthetic pathway for UDP-N-acetylglucosamine (UDP-GlcNAc). The C-terminal domain catalyzes the transfer of acetyl group from acetyl coenzyme A to glucosamine-1-phosphate (GlcN-1-P) to produce N-acetylglucosamine-1-phosphate (GlcNAc-1-P), which is converted into UDP-GlcNAc by the transfer of uridine 5-monophosphate (from uridine 5-triphosphate), a reaction catalyzed by the N-terminal domain. The sequence is that of Bifunctional protein GlmU from Psychrobacter arcticus (strain DSM 17307 / VKM B-2377 / 273-4).